The primary structure comprises 398 residues: Succinate--CoA ligase [ADP-forming] subunit beta (398 aa).

Residues K9–E254 enclose the ATP-grasp domain. Residues K46, G53–G55, E109, A112, and E117 contribute to the ATP site. Residues N209 and D223 each contribute to the Mg(2+) site. Residues N274 and G331–M333 each bind substrate.

This sequence belongs to the succinate/malate CoA ligase beta subunit family. Heterotetramer of two alpha and two beta subunits. Requires Mg(2+) as cofactor.

The enzyme catalyses succinate + ATP + CoA = succinyl-CoA + ADP + phosphate. It carries out the reaction GTP + succinate + CoA = succinyl-CoA + GDP + phosphate. It functions in the pathway carbohydrate metabolism; tricarboxylic acid cycle; succinate from succinyl-CoA (ligase route): step 1/1. Its function is as follows. Succinyl-CoA synthetase functions in the citric acid cycle (TCA), coupling the hydrolysis of succinyl-CoA to the synthesis of either ATP or GTP and thus represents the only step of substrate-level phosphorylation in the TCA. The beta subunit provides nucleotide specificity of the enzyme and binds the substrate succinate, while the binding sites for coenzyme A and phosphate are found in the alpha subunit. This is Succinate--CoA ligase [ADP-forming] subunit beta from Bartonella tribocorum (strain CIP 105476 / IBS 506).